A 341-amino-acid chain; its full sequence is UDP-3-O-(3-hydroxymyristoyl)glucosamine N-acyltransferase (341 aa).

The active-site Proton acceptor is His239.

This sequence belongs to the transferase hexapeptide repeat family. LpxD subfamily. As to quaternary structure, homotrimer.

It catalyses the reaction a UDP-3-O-[(3R)-3-hydroxyacyl]-alpha-D-glucosamine + a (3R)-hydroxyacyl-[ACP] = a UDP-2-N,3-O-bis[(3R)-3-hydroxyacyl]-alpha-D-glucosamine + holo-[ACP] + H(+). The catalysed reaction is UDP-3-O-[(3R)-3-hydroxytetradecanoyl]-alpha-D-glucosamine + (3R)-hydroxytetradecanoyl-[ACP] = UDP-2-N,3-O-bis[(3R)-3-hydroxytetradecanoyl]-alpha-D-glucosamine + holo-[ACP] + H(+). It functions in the pathway glycolipid biosynthesis; lipid IV(A) biosynthesis; lipid IV(A) from (3R)-3-hydroxytetradecanoyl-[acyl-carrier-protein] and UDP-N-acetyl-alpha-D-glucosamine: step 3/6. Catalyzes the N-acylation of UDP-3-O-(hydroxytetradecanoyl)glucosamine using 3-hydroxytetradecanoyl-ACP as the acyl donor. Is involved in the biosynthesis of lipid A, a phosphorylated glycolipid that anchors the lipopolysaccharide to the outer membrane of the cell. The chain is UDP-3-O-(3-hydroxymyristoyl)glucosamine N-acyltransferase from Salmonella choleraesuis (strain SC-B67).